A 627-amino-acid chain; its full sequence is MDLISVLPSTSKSCVCMHKPLSSSTHKLKPFCRTIRILGMPRPRKSVLMASSMSMSVNTLVSDDDIQRRTGGYHSNLWNDDVIQFLSTPYGELAYRERGERLIDEVRDIFSSMSLEDGEFSDLIQRLWMVDNVERLGIDRHFKNEIKSALDYVYSYWSEKGIGCGTKSIITNLNSTALGFRTLPLHGYPVSADVLKHFRNQIGQFVSCPSETEEDIRSMVNLYRASLIAFPGEEVMEEAESFSEKYLKETLQKIPDCSLSREIGDVLEHGWHTNLPRFEARNYIDVFGQDTKNMESNRKTEKLLELAKLEFNIFQSIQKTELESLLRWWNDSGSPQITFTRHRHVEYYTLASCIAFEPQHSGFRLGFAKACHIITVLDDMYDLFGTVEELKLFTAAIKRWDPSATDCLPQYMKGIYMMVYNTVNEMSAEAQKAQGRDTLNYARQAWEVYLDSYMQEAKWIATGYLPTFEEYLENGKVSSGHRVSALQPMLTMDIPFPPHILKEVDFPSNLNDLACAILRLRGDTRCYQEDRARGEETSCISCYMIDNPGATEEDALNHLNVMISGVIKELNWELLKPDSSVPISSKKINFDITRAFHYGYKYRDGYSVSSVETKSLVMRTLLEPVPL.

A chloroplast-targeting transit peptide spans 1-50 (MDLISVLPSTSKSCVCMHKPLSSSTHKLKPFCRTIRILGMPRPRKSVLMA). Residues D378, D382, and D530 each contribute to the Mg(2+) site. A DDXXD motif motif is present at residues 378–382 (DDMYD).

The protein belongs to the terpene synthase family. Tpsd subfamily. Requires Mg(2+) as cofactor. The cofactor is Mn(2+).

It is found in the plastid. The protein resides in the chloroplast. It functions in the pathway terpene metabolism; oleoresin biosynthesis. It participates in secondary metabolite biosynthesis; terpenoid biosynthesis. Monoterpene synthase (TPS) involved in the biosynthesis of monoterpene natural products included in conifer oleoresin secretions and volatile emissions; these compounds contribute to biotic and abiotic stress defense against herbivores and pathogens. In Pinus contorta (Shore pine), this protein is Monoterpene synthase like 1, chloroplastic.